The following is a 195-amino-acid chain: dCTP deaminase (195 aa).

DCTP is bound by residues 105-110, D123, 131-133, Q152, Y166, K173, and Q177; these read RSSLGR and TLE. E133 (proton donor/acceptor) is an active-site residue. The segment at 159-195 is disordered; that stretch reads KSPAERPYGAERGSKYQGQTGPQASRIQGDREFGGDQ. Basic and acidic residues predominate over residues 160-172; sequence SPAERPYGAERGS. Residues 174–184 show a composition bias toward polar residues; it reads YQGQTGPQASR. Basic and acidic residues predominate over residues 186–195; it reads QGDREFGGDQ.

This sequence belongs to the dCTP deaminase family. Homotrimer.

It catalyses the reaction dCTP + H2O + H(+) = dUTP + NH4(+). It functions in the pathway pyrimidine metabolism; dUMP biosynthesis; dUMP from dCTP (dUTP route): step 1/2. Functionally, catalyzes the deamination of dCTP to dUTP. The protein is dCTP deaminase of Natronomonas pharaonis (strain ATCC 35678 / DSM 2160 / CIP 103997 / JCM 8858 / NBRC 14720 / NCIMB 2260 / Gabara) (Halobacterium pharaonis).